The following is a 148-amino-acid chain: Truncated transcription factor CAULIFLOWER D (148 aa).

One can recognise an MADS-box domain in the interval 1-61; it reads MGRGRVEMKR…GKLFEYSSES (61 aa). Residues 90 to 148 form the K-box; partial domain; sequence QTNWSMEYSRLKAKIELWERNQRHYLGEDLESISIKELQNLEQQLDTSLKHIRSRKVCK.

In terms of assembly, homodimer capable of binding to CArG-box sequences.

It is found in the nucleus. Probable transcription factor that promotes early floral meristem identity in synergy with APETALA1, FRUITFULL and LEAFY. Is required subsequently for the transition of an inflorescence meristem into a floral meristem. Seems to be partially redundant to the function of APETALA1. The polypeptide is Truncated transcription factor CAULIFLOWER D (CAL-D) (Brassica oleracea var. botrytis (Cauliflower)).